A 122-amino-acid polypeptide reads, in one-letter code: Small ribosomal subunit protein bS16 (122 aa).

Positions 81–122 are disordered; the sequence is GLMKRDAKNNPKKGEPGEKAKERAKERAEKAAAGSTEDAAAE. Positions 83–110 are enriched in basic and acidic residues; sequence MKRDAKNNPKKGEPGEKAKERAKERAEK. Residues 111 to 122 are compositionally biased toward low complexity; sequence AAAGSTEDAAAE.

The protein belongs to the bacterial ribosomal protein bS16 family.

The sequence is that of Small ribosomal subunit protein bS16 from Xanthobacter autotrophicus (strain ATCC BAA-1158 / Py2).